The sequence spans 202 residues: Nucleoside triphosphate pyrophosphatase (202 aa).

The active-site Proton acceptor is D79.

The protein belongs to the Maf family. A divalent metal cation is required as a cofactor.

Its subcellular location is the cytoplasm. The enzyme catalyses a ribonucleoside 5'-triphosphate + H2O = a ribonucleoside 5'-phosphate + diphosphate + H(+). It catalyses the reaction a 2'-deoxyribonucleoside 5'-triphosphate + H2O = a 2'-deoxyribonucleoside 5'-phosphate + diphosphate + H(+). In terms of biological role, nucleoside triphosphate pyrophosphatase. May have a dual role in cell division arrest and in preventing the incorporation of modified nucleotides into cellular nucleic acids. This Nitrobacter hamburgensis (strain DSM 10229 / NCIMB 13809 / X14) protein is Nucleoside triphosphate pyrophosphatase.